The sequence spans 187 residues: Elongation factor P (187 aa).

This sequence belongs to the elongation factor P family.

It localises to the cytoplasm. The protein operates within protein biosynthesis; polypeptide chain elongation. Its function is as follows. Involved in peptide bond synthesis. Stimulates efficient translation and peptide-bond synthesis on native or reconstituted 70S ribosomes in vitro. Probably functions indirectly by altering the affinity of the ribosome for aminoacyl-tRNA, thus increasing their reactivity as acceptors for peptidyl transferase. The chain is Elongation factor P from Mycobacterium ulcerans (strain Agy99).